Reading from the N-terminus, the 289-residue chain is ATP synthase gamma chain (289 aa).

This sequence belongs to the ATPase gamma chain family. F-type ATPases have 2 components, CF(1) - the catalytic core - and CF(0) - the membrane proton channel. CF(1) has five subunits: alpha(3), beta(3), gamma(1), delta(1), epsilon(1). CF(0) has three main subunits: a, b and c.

The protein localises to the cell membrane. In terms of biological role, produces ATP from ADP in the presence of a proton gradient across the membrane. The gamma chain is believed to be important in regulating ATPase activity and the flow of protons through the CF(0) complex. This chain is ATP synthase gamma chain, found in Buchnera aphidicola subsp. Melaphis rhois.